Here is a 367-residue protein sequence, read N- to C-terminus: Glutamate 5-kinase (367 aa).

Lysine 10 contacts ATP. Substrate contacts are provided by serine 50, aspartate 137, and asparagine 149. ATP-binding positions include 169 to 170 (TD) and 211 to 217 (TGGMETK). Residues 275-353 (AGDITVDDGA…QDISDILGYE (79 aa)) enclose the PUA domain.

It belongs to the glutamate 5-kinase family.

Its subcellular location is the cytoplasm. The catalysed reaction is L-glutamate + ATP = L-glutamyl 5-phosphate + ADP. It functions in the pathway amino-acid biosynthesis; L-proline biosynthesis; L-glutamate 5-semialdehyde from L-glutamate: step 1/2. Catalyzes the transfer of a phosphate group to glutamate to form L-glutamate 5-phosphate. This is Glutamate 5-kinase from Sodalis glossinidius (strain morsitans).